The chain runs to 427 residues: UDP-N-acetylglucosamine 1-carboxyvinyltransferase 2 (427 aa).

Phosphoenolpyruvate is bound at residue 19–20 (KN). Arginine 91 is a UDP-N-acetyl-alpha-D-glucosamine binding site. The active-site Proton donor is the cysteine 115. Position 115 is a 2-(S-cysteinyl)pyruvic acid O-phosphothioketal (cysteine 115). 2 residues coordinate UDP-N-acetyl-alpha-D-glucosamine: aspartate 307 and valine 329.

The protein belongs to the EPSP synthase family. MurA subfamily.

It is found in the cytoplasm. The enzyme catalyses phosphoenolpyruvate + UDP-N-acetyl-alpha-D-glucosamine = UDP-N-acetyl-3-O-(1-carboxyvinyl)-alpha-D-glucosamine + phosphate. Its pathway is cell wall biogenesis; peptidoglycan biosynthesis. In terms of biological role, cell wall formation. Adds enolpyruvyl to UDP-N-acetylglucosamine. The sequence is that of UDP-N-acetylglucosamine 1-carboxyvinyltransferase 2 from Prochlorococcus marinus (strain SARG / CCMP1375 / SS120).